A 960-amino-acid polypeptide reads, in one-letter code: Isoleucine--tRNA ligase (960 aa).

The short motif at 82 to 92 (PYANGHIHIGH) is the 'HIGH' region element. Position 606 (Glu-606) interacts with L-isoleucyl-5'-AMP. The short motif at 647–651 (KMSKS) is the 'KMSKS' region element. Lys-650 contributes to the ATP binding site. Zn(2+) is bound by residues Cys-931, Cys-934, Cys-951, and Cys-954.

The protein belongs to the class-I aminoacyl-tRNA synthetase family. IleS type 1 subfamily. Monomer. Zn(2+) is required as a cofactor.

It is found in the cytoplasm. It catalyses the reaction tRNA(Ile) + L-isoleucine + ATP = L-isoleucyl-tRNA(Ile) + AMP + diphosphate. Functionally, catalyzes the attachment of isoleucine to tRNA(Ile). As IleRS can inadvertently accommodate and process structurally similar amino acids such as valine, to avoid such errors it has two additional distinct tRNA(Ile)-dependent editing activities. One activity is designated as 'pretransfer' editing and involves the hydrolysis of activated Val-AMP. The other activity is designated 'posttransfer' editing and involves deacylation of mischarged Val-tRNA(Ile). The protein is Isoleucine--tRNA ligase of Gluconobacter oxydans (strain 621H) (Gluconobacter suboxydans).